The sequence spans 312 residues: Src-like-adapter (312 aa).

The interval methionine 1 to serine 33 is disordered. One can recognise an SH3 domain in the interval leucine 38 to histidine 98. Positions tryptophan 100 to cysteine 191 constitute an SH2 domain. The interval cysteine 206–threonine 312 is SLA C-terminal. Serine 274 carries the phosphoserine modification.

Homodimer. Interacts with phosphorylated CBL, SYK and LAT. Homodimerization and interaction with phosphorylated CBL occurs via its C-terminal domain. Interacts with PDGFRB and EPHA2. Interacts with phosphorylated proteins ZAP70; CD3Z; VAV1 and LCP2 via its SH2 domain. In terms of processing, phosphorylated.

The protein localises to the cytoplasm. It is found in the endosome. Adapter protein, which negatively regulates T-cell receptor (TCR) signaling. Inhibits T-cell antigen-receptor induced activation of nuclear factor of activated T-cells. Involved in the negative regulation of positive selection and mitosis of T-cells. May act by linking signaling proteins such as ZAP70 with CBL, leading to a CBL dependent degradation of signaling proteins. This is Src-like-adapter (Sla) from Rattus norvegicus (Rat).